A 1144-amino-acid polypeptide reads, in one-letter code: Formin-like protein 18 (1144 aa).

Residues 17 to 193 (LEISERVYVF…QYISRRNVGS (177 aa)) form the Phosphatase tensin-type domain. Cys126 (phosphocysteine intermediate) is an active-site residue. A C2 tensin-type domain is found at 199-338 (DQALTLDCVN…FSAEVIFSEM (140 aa)). 2 disordered regions span residues 429–463 (ISENIVSSPDTSSPEKEKDTMSSHKSYADPNSILK) and 482–729 (KIFS…KGRG). Over residues 441–450 (SPEKEKDTMS) the composition is skewed to basic and acidic residues. Residues 491 to 522 (SPVTSPLPNRSPTQGSPASISRFHSSPSSLGI) show a composition bias toward polar residues. The span at 526-536 (LHDHGSCKDEE) shows a compositional bias: basic and acidic residues. Residues 538–548 (TSSSPASPSIS) are compositionally biased toward low complexity. Polar residues predominate over residues 555–580 (PLTSSQPKKASPQCPQSPTPVHSNGP). Pro residues predominate over residues 603–613 (RPPPPPPPPPI). A compositionally biased stretch (low complexity) spans 614-629 (SSLRSTPSPSSTSNSI). The segment covering 633 to 643 (GPPPPPPPPPL) has biased composition (pro residues). The span at 644–653 (QSHRSALSSS) shows a compositional bias: low complexity. Residues 669–678 (NPPPPPPPPL) are compositionally biased toward pro residues. Low complexity predominate over residues 679-695 (HSNSRMGAPTSSLVLKS). A compositionally biased stretch (pro residues) spans 696–705 (PPVPPPPAPA). The 401-residue stretch at 735 to 1135 (KGQGQTRKAN…RAQKEAENEK (401 aa)) folds into the FH2 domain.

It belongs to the formin-like family. Class-II subfamily.

The polypeptide is Formin-like protein 18 (FH18) (Arabidopsis thaliana (Mouse-ear cress)).